Consider the following 962-residue polypeptide: Glycine dehydrogenase (decarboxylating) (962 aa).

K709 is modified (N6-(pyridoxal phosphate)lysine).

Belongs to the GcvP family. The glycine cleavage system is composed of four proteins: P, T, L and H. Pyridoxal 5'-phosphate serves as cofactor.

It catalyses the reaction N(6)-[(R)-lipoyl]-L-lysyl-[glycine-cleavage complex H protein] + glycine + H(+) = N(6)-[(R)-S(8)-aminomethyldihydrolipoyl]-L-lysyl-[glycine-cleavage complex H protein] + CO2. Its function is as follows. The glycine cleavage system catalyzes the degradation of glycine. The P protein binds the alpha-amino group of glycine through its pyridoxal phosphate cofactor; CO(2) is released and the remaining methylamine moiety is then transferred to the lipoamide cofactor of the H protein. This chain is Glycine dehydrogenase (decarboxylating), found in Shewanella sp. (strain ANA-3).